Here is a 263-residue protein sequence, read N- to C-terminus: uncharacterized protein (263 aa).

7 helical membrane passes run 53–73, 103–123, 130–150, 153–173, 181–201, 213–233, and 241–261; these read FWIILILTFISLCEVKLLVKI, GFLFGSPFAIGQIILFLLPGL, IILPLLLSSLGLFGFGLVFSY, LIPAALNFFLNYSDEVIEPLW, FILVLFYSTGLAFQIPIIQIL, MLAAWRYIILVSTIIGAILTP, and LLLSIAILMLYFSGVGILFLI.

This sequence belongs to the TatC family.

The protein resides in the plastid. The protein localises to the chloroplast membrane. This is an uncharacterized protein from Trieres chinensis (Marine centric diatom).